Here is a 419-residue protein sequence, read N- to C-terminus: Zinc metalloprotease RasP (419 aa).

The next 4 membrane-spanning stretches (helical) occupy residues 4-24 (VIAF…GHLI), 173-193 (IAAG…MLGL), 349-369 (LAAF…PALD), and 391-411 (EAFV…VVTW). Residue His-18 coordinates Zn(2+). The active site involves Glu-19. A Zn(2+)-binding site is contributed by His-22. The PDZ domain occupies 184 to 269 (AYVILVMLGL…KLTKYVTPEA (86 aa)).

It belongs to the peptidase M50B family. Zn(2+) serves as cofactor.

It is found in the cell membrane. Its function is as follows. Is responsible for Site-2 cleavage of the RsiW anti-sigma factor. This results, after a third proteolytic step catalyzed by the ClpXP protease, in the release of SigW and the transcription activation of the genes under the control of the sigma-W factor. The polypeptide is Zinc metalloprotease RasP (rasP) (Bacillus licheniformis (strain ATCC 14580 / DSM 13 / JCM 2505 / CCUG 7422 / NBRC 12200 / NCIMB 9375 / NCTC 10341 / NRRL NRS-1264 / Gibson 46)).